The chain runs to 635 residues: Cationic amino acid transporter 4 (635 aa).

Transmembrane regions (helical) follow at residues 42–62 (LTLL…TGTV), 66–86 (MAGP…LLAA), and 113–133 (IWAF…GAAV). Residues asparagine 146, asparagine 151, and asparagine 195 are each glycosylated (N-linked (GlcNAc...) asparagine). The helical transmembrane segment at 197-217 (TFSAISLIVILFIIVLGFILA) threads the bilayer. The N-linked (GlcNAc...) asparagine glycan is linked to asparagine 221. The next 5 helical transmembrane spans lie at 229–249 (FAPF…YAFV), 270–290 (MAIA…STVL), 318–338 (GFIV…SNLF), 365–385 (QVPV…ALLL), and 391–411 (VQFL…SIIV). A phosphoserine mark is found at serine 422 and serine 427. The next 4 helical transmembrane spans lie at 478–498 (VAWA…VLVF), 508–528 (WGYV…LLVL), 539–559 (TFQI…NTCL), and 567–587 (TWLR…GYGI).

Belongs to the amino acid-polyamine-organocation (APC) superfamily. Cationic amino acid transporter (CAT) (TC 2.A.3.3) family.

The protein resides in the membrane. In terms of biological role, involved in the transport of the cationic amino acids (arginine, lysine and ornithine). The chain is Cationic amino acid transporter 4 (Slc7a4) from Mus musculus (Mouse).